The primary structure comprises 238 residues: Ribosomal RNA small subunit methyltransferase G (238 aa).

Residues Gly-75, Leu-80, 126–127, and Arg-142 each bind S-adenosyl-L-methionine; that span reads AE.

It belongs to the methyltransferase superfamily. RNA methyltransferase RsmG family.

The protein resides in the cytoplasm. Specifically methylates the N7 position of guanine in position 518 of 16S rRNA. This chain is Ribosomal RNA small subunit methyltransferase G, found in Streptomyces avermitilis (strain ATCC 31267 / DSM 46492 / JCM 5070 / NBRC 14893 / NCIMB 12804 / NRRL 8165 / MA-4680).